The following is a 392-amino-acid chain: Cell division protein FtsZ (392 aa).

Residues 24-28 (GGGCN), 111-113 (GTG), Glu142, Arg145, and Asp189 each bind GTP.

The protein belongs to the FtsZ family. As to quaternary structure, homodimer. Polymerizes to form a dynamic ring structure in a strictly GTP-dependent manner. Interacts directly with several other division proteins.

The protein localises to the cytoplasm. Its function is as follows. Essential cell division protein that forms a contractile ring structure (Z ring) at the future cell division site. The regulation of the ring assembly controls the timing and the location of cell division. One of the functions of the FtsZ ring is to recruit other cell division proteins to the septum to produce a new cell wall between the dividing cells. Binds GTP and shows GTPase activity. In Neisseria meningitidis serogroup A / serotype 4A (strain DSM 15465 / Z2491), this protein is Cell division protein FtsZ.